Consider the following 437-residue polypeptide: GTPase Obg (437 aa).

An Obg domain is found at 2-160 (SLFLDTARIE…KILLLELRVL (159 aa)). In terms of domain architecture, OBG-type G spans 161–338 (ADVGLVGFPS…LLARTSELLA (178 aa)). GTP contacts are provided by residues 167–174 (GFPSVGKS), 192–196 (FTTIT), 214–217 (DMPG), 284–287 (NKMD), and 319–321 (SGL). The Mg(2+) site is built by Ser-174 and Thr-194. One can recognise an OCT domain in the interval 359-437 (GFEDEEKPFK…IQKFEFEFVD (79 aa)).

The protein belongs to the TRAFAC class OBG-HflX-like GTPase superfamily. OBG GTPase family. As to quaternary structure, monomer. Requires Mg(2+) as cofactor.

It is found in the cytoplasm. Functionally, an essential GTPase which binds GTP, GDP and possibly (p)ppGpp with moderate affinity, with high nucleotide exchange rates and a fairly low GTP hydrolysis rate. Plays a role in control of the cell cycle, stress response, ribosome biogenesis and in those bacteria that undergo differentiation, in morphogenesis control. This Lactococcus lactis subsp. cremoris (strain SK11) protein is GTPase Obg.